We begin with the raw amino-acid sequence, 238 residues long: 14-3-3 family protein artA (238 aa).

Belongs to the 14-3-3 family.

In terms of biological role, 14-3-3 family protein that plays a role in the morphological differentiation and secondary metabolism biosynthesis. Required for normal fungal morphogenesis in an environment-dependent manner, affecting the balance between production of conidiophores and the formation of sclerotia, resistant structures that are necessary for the dissemination and survival. Acts as a positive regulator of conidiation and a negative regulator of sclerotial production. Also regulates the production of secondary metabolites such as aflatoxin, but also the indole-tetramic acid mycotoxin cyclopiazonic acid (CPA) and ustiloxin, an inhibitor of microtubule assembly. The chain is 14-3-3 family protein artA from Aspergillus flavus (strain ATCC 200026 / FGSC A1120 / IAM 13836 / NRRL 3357 / JCM 12722 / SRRC 167).